Consider the following 1142-residue polypeptide: MSGPAQVPMMSPNGSVPPIYVPPGYAPQVIEDNGVRRVVVVPQAPEFHPGGHTVLHRSPHPPLPGFIPVPTMMPPPPRHMYSPVTGAGDMTTQYMPQYQSSQVYGDVDAHSTHGRSNFRDERSSKTYERLQKKLKDRQGTQKDKMSSPPSSPQKCPSPINEHNGLIKGQNAGGINTGSAKIKSGKGKGGTQVDTEIEEKDEETKAFEALLSNIVKPVASDIQARTVVLTWSPPSSLINGETDESSVPELYGYEVLISSTGKDGKYKSVYIGEETNITLNDLKPATDYHAKVQAEYNSIKGTPSEAEIFTTLSCEPDIPNPPRIANRTKNSLTLQWKAPSDNGSKIQNFVLEWDEGKGNGEFYQCYMGSQKQFKITKLSPAMGCKFRLSARNDYGTSGFSEEVLYYTSGCAPSMPASPVLTKAGITWLSLQWSKPSGTPSDEGISYILEMEEETSGYGFKPKYDGEDLAYTVKNLRRSTKYKFKVIAYNSEGKSNPSEVVEFTTCPDKPGIPVKPSVKGKIHSHSFKITWDPPKDNGGAAINKYVVEMAEGSNGNKWEMIYSGATREHLCDRLNPGCFYRLRVYCISDGGQSAVSESLLVQTPAVPPGPCLPPRLQGRPKAKEIQLRWGPPLVDGGSPISCYSVEMSPIEKDEPREVYQGSEVECTVSSLLPGKTYSFRLRAANKMGFGPFSEKCDITTAPGPPDQCKPPQVTCRSATCAQVNWEVPLSNGTDVTEYRLEWGGVEGSMQICYCGPGLNYEIKGLSPATTYYCRVQALSVVGAGPFSEVVACVTPPSVPGIVTCLQEISDDEIENPHYSPSTCLAISWEKPCDHGSEILAYSIDSGDKQSLTVGKVTSYIINNLQPDTTYRIRIQALNSLGAGPFSHVIKLKTKPLPPDPPRLECVAFSHQNLKLKWGEGTPKTLSTDSIQYHLQMEDKNGRFVSLYRGPCHTYKVQRLNESTSYKFCIQACNEAGEGPVSQEYIFTTPKSVPAALKAPKIEKVNDHICEITWECLQPMKGDPVIYSLQVMLGKDSEFKQIYKGPDSSFRYSSLQLNCEYRFRVCAIRQCQDSLGHQDLVGPYSTTVLFISQRTEPPASTNRDTVESTRTRRALSDEQCAAVNLVLFAFFSILIAFIIQYFVIK.

Residues 104-191 (YGDVDAHSTH…KSGKGKGGTQ (88 aa)) are disordered. Basic and acidic residues predominate over residues 107 to 145 (VDAHSTHGRSNFRDERSSKTYERLQKKLKDRQGTQKDKM). Residues 146 to 158 (SSPPSSPQKCPSP) are compositionally biased toward low complexity. Phosphoserine is present on residues S147, S151, and S157. Fibronectin type-III domains follow at residues 212-313 (NIVK…TLSC), 317-409 (IPNP…TSGC), 413-506 (MPAS…TCPD), 510-604 (IPVK…TPAV), 608-701 (PCLP…TAPG), 705-795 (QCKP…TPPS), 805-894 (EISD…TKPL), 895-989 (PPDP…TPKS), and 990-1095 (VPAA…TEPP). K328 is subject to N6-acetyllysine. The chain crosses the membrane as a helical span at residues 1121–1141 (NLVLFAFFSILIAFIIQYFVI).

It belongs to the FNDC3 family.

It localises to the golgi apparatus membrane. Functionally, mediates spermatid-Sertoli adhesion during spermatogenesis. This chain is Fibronectin type-III domain-containing protein 3A (FNDC3A), found in Pongo abelii (Sumatran orangutan).